The primary structure comprises 510 residues: Pyruvate kinase, cytosolic isozyme (510 aa).

A substrate-binding site is contributed by Arg-50. K(+)-binding residues include Asn-52, Ser-54, Asp-84, and Thr-85. Residue 52-55 (NFSH) participates in ATP binding. Arg-91 and Lys-176 together coordinate ATP. Glu-242 contacts Mg(2+). 3 residues coordinate substrate: Gly-265, Asp-266, and Thr-298. Asp-266 serves as a coordination point for Mg(2+).

This sequence belongs to the pyruvate kinase family. In terms of assembly, homotetramer. The cofactor is Mg(2+). K(+) is required as a cofactor.

Its subcellular location is the cytoplasm. It catalyses the reaction pyruvate + ATP = phosphoenolpyruvate + ADP + H(+). The protein operates within carbohydrate degradation; glycolysis; pyruvate from D-glyceraldehyde 3-phosphate: step 5/5. The chain is Pyruvate kinase, cytosolic isozyme from Solanum tuberosum (Potato).